The sequence spans 107 residues: ATP-dependent Clp protease adapter protein ClpS (107 aa).

The protein belongs to the ClpS family. Binds to the N-terminal domain of the chaperone ClpA.

Its function is as follows. Involved in the modulation of the specificity of the ClpAP-mediated ATP-dependent protein degradation. In Syntrophus aciditrophicus (strain SB), this protein is ATP-dependent Clp protease adapter protein ClpS.